A 238-amino-acid polypeptide reads, in one-letter code: 7-cyano-7-deazaguanine synthase (238 aa).

Leucine 10 to leucine 20 contributes to the ATP binding site. Residues cysteine 190, cysteine 198, cysteine 201, and cysteine 204 each coordinate Zn(2+).

Belongs to the QueC family. It depends on Zn(2+) as a cofactor.

The enzyme catalyses 7-carboxy-7-deazaguanine + NH4(+) + ATP = 7-cyano-7-deazaguanine + ADP + phosphate + H2O + H(+). It participates in purine metabolism; 7-cyano-7-deazaguanine biosynthesis. Catalyzes the ATP-dependent conversion of 7-carboxy-7-deazaguanine (CDG) to 7-cyano-7-deazaguanine (preQ(0)). The chain is 7-cyano-7-deazaguanine synthase from Thermoplasma acidophilum (strain ATCC 25905 / DSM 1728 / JCM 9062 / NBRC 15155 / AMRC-C165).